Reading from the N-terminus, the 154-residue chain is Large ribosomal subunit protein uL13 (154 aa).

The protein belongs to the universal ribosomal protein uL13 family. In terms of assembly, part of the 50S ribosomal subunit.

Its function is as follows. This protein is one of the early assembly proteins of the 50S ribosomal subunit, although it is not seen to bind rRNA by itself. It is important during the early stages of 50S assembly. The protein is Large ribosomal subunit protein uL13 of Rhizobium meliloti (strain 1021) (Ensifer meliloti).